We begin with the raw amino-acid sequence, 469 residues long: MNKGRVTQIMGPVVDVKFDGGKLPEIYNALTVKQSNENGASINLTFEVALHLGDDTVRTVAMSSTDGLVRGTEVEDTGKAISVPVGDVTLGRVFNVLGDAIDLDGDVPADVRRDPIHRQAPAFEELSTKVEILETGIKVVDLLAPYIKGGKIGLFGGAGVGKTVLIQELINNIAQEHGGISVFAGVGERTREGNDLYHEMSDSGVIKKTAMVFGQMNEPPGARQRVALTGLTMAEHFRDEQGQDVLLFIDNIFRFTQAGSEVSALLGRMPSAVGYQPTLATEMGQLQERITSTNKGSITSIQAVYVPADDYTDPAPATTFAHLDATTNLERRLTQMGIYPAVDPLASTSRALSPEIVGEEHYEVARQVQQTLQRYKELQDIIAILGMDELSEEDKLVVHRARRIQFFLSQNFHVAEQFTGQKGSYVPVKNTVSGFKEILEGKYDDLPEDAFRLVGSIEEVIENAKKMMA.

Residue 156–163 (GGAGVGKT) participates in ATP binding.

It belongs to the ATPase alpha/beta chains family. In terms of assembly, F-type ATPases have 2 components, CF(1) - the catalytic core - and CF(0) - the membrane proton channel. CF(1) has five subunits: alpha(3), beta(3), gamma(1), delta(1), epsilon(1). CF(0) has three main subunits: a(1), b(2) and c(9-12). The alpha and beta chains form an alternating ring which encloses part of the gamma chain. CF(1) is attached to CF(0) by a central stalk formed by the gamma and epsilon chains, while a peripheral stalk is formed by the delta and b chains.

Its subcellular location is the cell membrane. The catalysed reaction is ATP + H2O + 4 H(+)(in) = ADP + phosphate + 5 H(+)(out). In terms of biological role, produces ATP from ADP in the presence of a proton gradient across the membrane. The catalytic sites are hosted primarily by the beta subunits. The sequence is that of ATP synthase subunit beta from Bacillus mycoides (strain KBAB4) (Bacillus weihenstephanensis).